Reading from the N-terminus, the 490-residue chain is Histone-lysine N-methyltransferase SMYD1 (490 aa).

One can recognise an SET domain in the interval 7–253; sequence ENVEVFTAEG…EGEELTVSYI (247 aa). 17–19 provides a ligand contact to S-adenosyl-L-methionine; it reads KGR. Residues Cys52, Cys55, Cys65, Cys68, Cys74, Cys78, His86, and Cys90 each contribute to the Zn(2+) site. The MYND-type zinc-finger motif lies at 52–90; it reads CHTCFKRQEKLHRCGQCKFAHYCDRTCQKDAWLNHKNEC. S-adenosyl-L-methionine is bound by residues His135 and 205–206; that span reads NH. Cys208 serves as a coordination point for Zn(2+). Residue 270-272 participates in S-adenosyl-L-methionine binding; that stretch reads YYF. Zn(2+)-binding residues include Cys274, Cys276, and Cys279.

Belongs to the class V-like SAM-binding methyltransferase superfamily. In terms of assembly, interacts with HDAC1, HDAC2 and HDAC3. Interacts (via MYND-type zinc finger) with NACA isoform skNAC. Expression seems mostly restricted to heart and skeletal muscle.

Its subcellular location is the cytoplasm. The protein localises to the nucleus. The enzyme catalyses L-lysyl(4)-[histone H3] + 3 S-adenosyl-L-methionine = N(6),N(6),N(6)-trimethyl-L-lysyl(4)-[histone H3] + 3 S-adenosyl-L-homocysteine + 3 H(+). Its function is as follows. Methylates histone H3 at 'Lys-4' (H3K4me), seems able to perform both mono-, di-, and trimethylation. Acts as a transcriptional repressor. Essential for cardiomyocyte differentiation and cardiac morphogenesis. The sequence is that of Histone-lysine N-methyltransferase SMYD1 (SMYD1) from Homo sapiens (Human).